Consider the following 746-residue polypeptide: WD repeat-containing protein 91 (746 aa).

The stretch at 183–215 forms a coiled coil; it reads QRTNQVQEENEVLRQKLFALQAEIHRLKKEEQQ. Position 256 is a phosphoserine (Ser256). The segment covering 265–278 has biased composition (low complexity); that stretch reads LLPQSKKSPSRLSP. A disordered region spans residues 265–336; it reads LLPQSKKSPS…QHRQRRLQDH (72 aa). The span at 282–299 shows a compositional bias: polar residues; that stretch reads PPQTQSSAKKESFGSQTT. 2 positions are modified to phosphoserine: Ser288 and Ser293. WD repeat units lie at residues 405–444, 447–487, 514–554, 559–598, 601–640, 663–701, and 708–746; these read EHHSSIMHCRVDCSGRRVASLDVDGVIKVWSFNPIMQTKA, ISKS…NLCE, AASS…QQLQ, PEPIAINCTAFNHNGNLLVTGAADGVIRLFDMQQHECAMS, AHCGEVYSVEFSYDENTVYSIGEDGKFIQWNIHKSGLKVS, VQVPRGRLFAFDSEGNYMLTCSATGGVIYKLGGDDKVLE, and GHRAPVVTVDWSTAMDCGTCLTASMDGKIKLTTLLAHKV.

The protein belongs to the WD repeat WDR91 family. In terms of assembly, interacts with WDR81; involved in early to late endosome cargo transport. Interacts with BECN1; negatively regulates the PI3 kinase/PI3K activity associated with endosomal membranes.

The protein resides in the early endosome membrane. The protein localises to the late endosome membrane. Functions as a negative regulator of the PI3 kinase/PI3K activity associated with endosomal membranes via BECN1, a core subunit of the PI3K complex. By modifying the phosphatidylinositol 3-phosphate/PtdInsP3 content of endosomal membranes may regulate endosome fusion, recycling, sorting and early to late endosome transport. It is for instance, required for the delivery of cargos like BST2/tetherin from early to late endosome and thereby participates indirectly to their degradation by the lysosome. May play a role in meiosis. This chain is WD repeat-containing protein 91, found in Bos taurus (Bovine).